A 329-amino-acid polypeptide reads, in one-letter code: Vacuolar protein sorting-associated protein 26B-like (329 aa).

The protein belongs to the VPS26 family.

Its subcellular location is the cytoplasm. The protein localises to the membrane. Functionally, probable component of the retromer complex, a complex required to retrieve lysosomal enzyme receptors (IGF2R and M6PR) from endosomes to the trans-Golgi network. The polypeptide is Vacuolar protein sorting-associated protein 26B-like (vps26bl) (Danio rerio (Zebrafish)).